Here is a 164-residue protein sequence, read N- to C-terminus: uncharacterized protein (164 aa).

This is an uncharacterized protein from Arabidopsis thaliana (Mouse-ear cress).